The chain runs to 439 residues: Trigger factor (439 aa).

The PPIase FKBP-type domain occupies 165 to 250 (GDFAKFDFEG…LHEIQELKLP (86 aa)).

The protein belongs to the FKBP-type PPIase family. Tig subfamily.

The protein localises to the cytoplasm. It catalyses the reaction [protein]-peptidylproline (omega=180) = [protein]-peptidylproline (omega=0). Functionally, involved in protein export. Acts as a chaperone by maintaining the newly synthesized protein in an open conformation. Functions as a peptidyl-prolyl cis-trans isomerase. This Campylobacter lari (strain RM2100 / D67 / ATCC BAA-1060) protein is Trigger factor.